Consider the following 277-residue polypeptide: NADPH-dependent 7-cyano-7-deazaguanine reductase (277 aa).

Ile86–Ser88 is a binding site for substrate. An NADPH-binding site is contributed by Ser88–Lys89. The active-site Thioimide intermediate is the Cys185. Catalysis depends on Asp192, which acts as the Proton donor. Substrate is bound at residue His224–Glu225. Arg253–Gly254 provides a ligand contact to NADPH.

The protein belongs to the GTP cyclohydrolase I family. QueF type 2 subfamily. In terms of assembly, homodimer.

The protein localises to the cytoplasm. The enzyme catalyses 7-aminomethyl-7-carbaguanine + 2 NADP(+) = 7-cyano-7-deazaguanine + 2 NADPH + 3 H(+). It participates in tRNA modification; tRNA-queuosine biosynthesis. Catalyzes the NADPH-dependent reduction of 7-cyano-7-deazaguanine (preQ0) to 7-aminomethyl-7-deazaguanine (preQ1). The chain is NADPH-dependent 7-cyano-7-deazaguanine reductase from Hydrogenovibrio crunogenus (strain DSM 25203 / XCL-2) (Thiomicrospira crunogena).